Here is an 889-residue protein sequence, read N- to C-terminus: MAERGRLGLPGAPGALNTPVPMNLFATWEVDGSSPSCVPRLCSLTLKKLVVFKELEKELISVVIAVKMQGSKRILRSHEIVLPPSGQVETDLALTFSLQYPHFLKREGNKLQIMLQRRKRYKNRTILGYKTLAAGSISMAEVMQHPSEGGQVLSLCSSIKEAPVKAAEIWIASLSSQPIDHEDSTMQAGPKAKSTDNYSEEEYESFSSEQEASDDAVQGQDLDEDDFDVGKPKKQRRSIVRTTSMTRQQNFKQKVVALLRRFKVSDEVLDSEQDPAEHIPEAEEDLDLLYDTLDMEHPSDSGPDMEDDDSVLSTPKPKLRPYFEGLSHSSSQTEIGSIHSARSHKEPPSPADVPEKTRSLGGRQPSDSVSDTVALGVPGPREHPGQPEDSPEAEASTLDVFTERLPPSGRITKTESLVIPSTRSEGKQAGRRGRSTSLKERQAARPQNERANSLDNERCPDARSQLQIPRKTVYDQLNHILISDDQLPENIILVNTSDWQGQFLSDVLQRHTLPVVCTCSPADVQAAFSTIVSRIQRYCNCNSQPPTPVKIAVAGAQHYLSAILRLFVEQLSHKTPDWLGYMRFLVIPLGSHPVARYLGSVDYRYNNFFQDLAWRDLFNKLEAQSAVQDTPDIVSRITQYIAGANCAHQLPIAEAMLTYKQKSPDEESSQKFIPFVGVVKVGIVEPSSATSGDSDDAAPSGSGTLSSTPPSASPAAKEASPTPPSSPSVSGGLSSPSQGVGAELMGLQVDYWTAAQPADRKRDAEKKDLPVTKNTLKCTFRSLQVSRLPSSGEAAATPTMSMTVVTKEKNKKVMFLPKKAKDKDVESKSQCIEGISRLICTARQQQNMLRVLIDGVECSDVKFFQLAAQWSSHVKHFPICIFGHSKATF.

3 disordered regions span residues 180-246, 293-463, and 687-740; these read DHED…TSMT, LDME…PDAR, and SSAT…SQGV. Basic and acidic residues predominate over residues 343–358; it reads SHKEPPSPADVPEKTR. 5 positions are modified to phosphoserine: Ser390, Ser416, Ser453, Ser691, and Ser694. Composition is skewed to low complexity over residues 687-720 and 727-737; these read SSAT…KEAS and PSVSGGLSSPS.

The protein belongs to the PACS family. Interacts with BID and PKD2. Interacts with SIRT1. Interacts with HDAC1. Interacts with TRPV1. Interacts with WDR37. In terms of assembly, (Microbial infection) Interacts with HIV-1 Nef. Broadly expressed, with greatest levels in skeletal muscle followed by heart, brain, pancreas and testis.

Its subcellular location is the endoplasmic reticulum. The protein resides in the mitochondrion. Multifunctional sorting protein that controls the endoplasmic reticulum (ER)-mitochondria communication, including the apposition of mitochondria with the ER and ER homeostasis. In addition, in response to apoptotic inducer, translocates BIB to mitochondria, which initiates a sequence of events including the formation of mitochondrial truncated BID, the release of cytochrome c, the activation of caspase-3 thereby causing cell death. May also be involved in ion channel trafficking, directing acidic cluster-containing ion channels to distinct subcellular compartments. This chain is Phosphofurin acidic cluster sorting protein 2, found in Homo sapiens (Human).